Reading from the N-terminus, the 108-residue chain is Thioredoxin C-2 (108 aa).

In terms of domain architecture, Thioredoxin spans Ser-2–Ile-108. Cysteines 33 and 36 form a disulfide.

Belongs to the thioredoxin family.

In terms of biological role, participates in various redox reactions through the reversible oxidation of its active center dithiol to a disulfide and catalyzes dithiol-disulfide exchange reactions. In Corynebacterium nephridii, this protein is Thioredoxin C-2.